Consider the following 505-residue polypeptide: L-carnitine/gamma-butyrobetaine antiporter (505 aa).

12 consecutive transmembrane segments (helical) span residues 10 to 30 (IEPK…WLTV), 50 to 70 (IWGW…FWLV), 92 to 112 (IFMM…SIEI), 143 to 163 (GPLP…FFFV), 195 to 215 (FYLV…TPLV), 231 to 251 (LDAI…ACGL), 263 to 283 (SYLS…SFIM), 316 to 336 (WTVF…IFLA), 347 to 367 (LCFG…TVLG), 403 to 423 (LSTA…VTLI), 446 to 466 (LLVR…LLAL), and 475 to 495 (AIIA…LSFI).

This sequence belongs to the BCCT transporter (TC 2.A.15) family. CaiT subfamily. As to quaternary structure, homotrimer.

It localises to the cell inner membrane. The catalysed reaction is 4-(trimethylamino)butanoate(in) + (R)-carnitine(out) = 4-(trimethylamino)butanoate(out) + (R)-carnitine(in). The protein operates within amine and polyamine metabolism; carnitine metabolism. Catalyzes the exchange of L-carnitine for gamma-butyrobetaine. The polypeptide is L-carnitine/gamma-butyrobetaine antiporter (Salmonella arizonae (strain ATCC BAA-731 / CDC346-86 / RSK2980)).